Here is a 300-residue protein sequence, read N- to C-terminus: Acetylglutamate kinase (300 aa).

Substrate-binding positions include G73–G74, R95, and N197.

The protein belongs to the acetylglutamate kinase family. ArgB subfamily.

It localises to the cytoplasm. The enzyme catalyses N-acetyl-L-glutamate + ATP = N-acetyl-L-glutamyl 5-phosphate + ADP. It functions in the pathway amino-acid biosynthesis; L-arginine biosynthesis; N(2)-acetyl-L-ornithine from L-glutamate: step 2/4. Its function is as follows. Catalyzes the ATP-dependent phosphorylation of N-acetyl-L-glutamate. The polypeptide is Acetylglutamate kinase (Bordetella petrii (strain ATCC BAA-461 / DSM 12804 / CCUG 43448)).